A 323-amino-acid polypeptide reads, in one-letter code: tRNA-dihydrouridine synthase B (323 aa).

Residues 16–18 and glutamine 70 contribute to the FMN site; that span reads PMA. Cysteine 100 serves as the catalytic Proton donor. Residues lysine 139, 200 to 202, and 224 to 225 contribute to the FMN site; these read NGD and GR.

It belongs to the Dus family. DusB subfamily. FMN is required as a cofactor.

The catalysed reaction is a 5,6-dihydrouridine in tRNA + NAD(+) = a uridine in tRNA + NADH + H(+). It catalyses the reaction a 5,6-dihydrouridine in tRNA + NADP(+) = a uridine in tRNA + NADPH + H(+). Its function is as follows. Catalyzes the synthesis of 5,6-dihydrouridine (D), a modified base found in the D-loop of most tRNAs, via the reduction of the C5-C6 double bond in target uridines. The polypeptide is tRNA-dihydrouridine synthase B (Proteus vulgaris).